Reading from the N-terminus, the 473-residue chain is GTPase Der (473 aa).

EngA-type G domains are found at residues 3 to 167 (FTVA…GKDR) and 203 to 378 (LRVA…RVWN). Residues 9-16 (GRPNVGKS), 56-60 (DTAGL), 119-122 (NKSE), 209-216 (GRPNAGKS), 256-260 (DTAGM), and 321-324 (NKWD) contribute to the GTP site. Positions 379–463 (KRISTARLNR…PIRIHFRSPD (85 aa)) constitute a KH-like domain.

Belongs to the TRAFAC class TrmE-Era-EngA-EngB-Septin-like GTPase superfamily. EngA (Der) GTPase family. In terms of assembly, associates with the 50S ribosomal subunit.

Functionally, GTPase that plays an essential role in the late steps of ribosome biogenesis. The protein is GTPase Der of Rhizobium etli (strain ATCC 51251 / DSM 11541 / JCM 21823 / NBRC 15573 / CFN 42).